Consider the following 756-residue polypeptide: Glutathione biosynthesis bifunctional protein GshAB (756 aa).

Residues Met-1–Ala-338 form a glutamate--cysteine ligase region. An ATP-grasp domain is found at Lys-493 to Tyr-751. Residue Leu-520 to Arg-578 coordinates ATP. Mg(2+) is bound by residues Asp-700, Glu-721, and Asn-723. Mn(2+)-binding residues include Asp-700, Glu-721, and Asn-723.

In the N-terminal section; belongs to the glutamate--cysteine ligase type 1 family. Type 2 subfamily. In terms of assembly, monomer. The cofactor is Mg(2+). Mn(2+) serves as cofactor.

The enzyme catalyses L-cysteine + L-glutamate + ATP = gamma-L-glutamyl-L-cysteine + ADP + phosphate + H(+). The catalysed reaction is gamma-L-glutamyl-L-cysteine + glycine + ATP = glutathione + ADP + phosphate + H(+). The protein operates within sulfur metabolism; glutathione biosynthesis; glutathione from L-cysteine and L-glutamate: step 1/2. Its pathway is sulfur metabolism; glutathione biosynthesis; glutathione from L-cysteine and L-glutamate: step 2/2. In terms of biological role, synthesizes glutathione from L-glutamate and L-cysteine via gamma-L-glutamyl-L-cysteine. In Enterococcus faecalis (strain ATCC 700802 / V583), this protein is Glutathione biosynthesis bifunctional protein GshAB.